Here is a 301-residue protein sequence, read N- to C-terminus: Inosose dehydratase (301 aa).

Belongs to the IolE/MocC family. Requires glutathione as cofactor. It depends on Co(2+) as a cofactor. Mn(2+) serves as cofactor.

The enzyme catalyses scyllo-inosose = 3D-3,5/4-trihydroxycyclohexane-1,2-dione + H2O. The protein operates within polyol metabolism; myo-inositol degradation into acetyl-CoA; acetyl-CoA from myo-inositol: step 2/7. Functionally, catalyzes the dehydration of inosose (2-keto-myo-inositol, 2KMI or 2,4,6/3,5-pentahydroxycyclohexanone) to 3D-(3,5/4)-trihydroxycyclohexane-1,2-dione (D-2,3-diketo-4-deoxy-epi-inositol). The sequence is that of Inosose dehydratase from Lacticaseibacillus casei (strain BL23) (Lactobacillus casei).